The chain runs to 798 residues: Cold shock domain-containing protein E1 (798 aa).

M1 is modified (N-acetylmethionine). One can recognise a CSD 1 domain in the interval 26–87 (ETGVIEKLLT…RTGKPIAVKL (62 aa)). Residue K81 is modified to N6-acetyllysine. Residue K91 forms a Glycyl lysine isopeptide (Lys-Gly) (interchain with G-Cter in SUMO2) linkage. S123 bears the Phosphoserine mark. Residues 136–179 (VFYLTYTPEDVEGNVQLETGDKINFVIDNNKHTGAVSARNIMLL) form the CSD 2; truncated domain. Positions 186-245 (CQGVVCAMKEAFGFIERGDVVKEIFFHYSEFKGDLETLQPGDDVEFTIKDRNGKEVATDV) constitute a CSD 3 domain. The residue at position 276 (S276) is a Phosphoserine. One can recognise a CSD 4; truncated domain in the interval 297-337 (LPFGDKDTKSKVTLLEGDHVRFNISTDRRDKLERATNIEVL). 2 CSD domains span residues 349–410 (EMGV…AIRI) and 447–507 (NKGK…ATCV). Phosphoserine is present on S514. The CSD 7 domain occupies 519 to 579 (LLGYVATLKD…KGNKVSAEKV (61 aa)). The residue at position 584 (S584) is a Phosphoserine. CSD domains are found at residues 610 to 670 (PTQT…AYNI) and 674 to 735 (RRAT…ACNV). An SUZ-C domain is found at 748 to 789 (PRPDRLVNRLKNITLDDASAPRLMVLRQPRGPDNSMGFGAER). T761 bears the Phosphothreonine mark.

The protein belongs to the UNR family. As to quaternary structure, component of a multi subunit autoregulatory ribonucleoprotein complex (ARC), at least composed of IGF2BP1, PABPC1 and CSDE1. Interacts with STRAP. Part of a complex associated with the FOS mCRD domain and consisting of PABPC1, PAIP1, HNRPD and SYNCRIP. The interaction with PABPC1 is direct and RNA-independent. Interacts with EIF4ENIF1/4E-T.

The protein resides in the cytoplasm. Its subcellular location is the stress granule. The protein localises to the P-body. Its function is as follows. RNA-binding protein involved in translationally coupled mRNA turnover. Implicated with other RNA-binding proteins in the cytoplasmic deadenylation/translational and decay interplay of the FOS mRNA mediated by the major coding-region determinant of instability (mCRD) domain. Required for efficient formation of stress granules. (Microbial infection) Required for internal initiation of translation of human rhinovirus RNA. The sequence is that of Cold shock domain-containing protein E1 from Homo sapiens (Human).